Consider the following 365-residue polypeptide: Palmitoyltransferase ZDHHC20 (365 aa).

At 1-14 (MAPCTLWRCCQRTV) the chain is on the cytoplasmic side. A helical membrane pass occupies residues 15-35 (GWVPVLFITFVVVWSYYAYVV). The Lumenal segment spans residues 36-53 (ELCVFTLSGNGENGKAVV). The helical transmembrane segment at 54–74 (YLVAFHLFFVMFVWSYWMTIF) threads the bilayer. Topologically, residues 75 to 169 (TSPASPSKEF…NNCVGFSNYK (95 aa)) are cytoplasmic. Positions 126–176 (RYCERCQLIKPDRAHHCSACDMCILKMDHHCPWVNNCVGFSNYKFFLLFLF) constitute a DHHC domain. Cys128 and Cys131 together coordinate Zn(2+). Substrate contacts are provided by residues Lys135 and 140–143 (HHCS). His141, Cys142, Cys145, Cys148, and His155 together coordinate Zn(2+). Cys156 serves as the catalytic S-palmitoyl cysteine intermediate. Zn(2+) is bound at residue Cys162. A helical membrane pass occupies residues 170–190 (FFLLFLFYSLLYCLFVATTVL). Residues 191-207 (QYFIKFWTNELTDTRAK) are Lumenal-facing. The chain crosses the membrane as a helical span at residues 208-231 (FHVLFLFFVSTMFFISVLSLLSYH). Over 232–365 (CWLVGKNRTT…NNHVTVAIEN (134 aa)) the chain is Cytoplasmic. Residues 301-365 (PEQASVSNQS…NNHVTVAIEN (65 aa)) are disordered. Polar residues predominate over residues 302-321 (EQASVSNQSESARSIGSNQP). Ser305 and Ser330 each carry phosphoserine.

It belongs to the DHHC palmitoyltransferase family. Autopalmitoylated (in vitro).

The protein localises to the golgi apparatus membrane. It is found in the cell membrane. The protein resides in the cytoplasm. It localises to the perinuclear region. Its subcellular location is the endoplasmic reticulum membrane. The protein localises to the endoplasmic reticulum-Golgi intermediate compartment membrane. The enzyme catalyses L-cysteinyl-[protein] + hexadecanoyl-CoA = S-hexadecanoyl-L-cysteinyl-[protein] + CoA. The catalysed reaction is L-cysteinyl-[protein] + tetradecanoyl-CoA = S-tetradecanoyl-L-cysteinyl-[protein] + CoA. It carries out the reaction L-cysteinyl-[protein] + octadecanoyl-CoA = S-octadecanoyl-L-cysteinyl-[protein] + CoA. Its function is as follows. Palmitoyltransferase that could catalyze the addition of palmitate onto various protein substrates. Catalyzes palmitoylation of Cys residues in the cytoplasmic C-terminus of EGFR, and modulates the duration of EGFR signaling by modulating palmitoylation-dependent EGFR internalization and degradation. Has a preference for acyl-CoA with C16 fatty acid chains. Can also utilize acyl-CoA with C14 and C18 fatty acid chains. May palmitoylate CALHM1 subunit of gustatory voltage-gated ion channels and modulate channel gating and kinetics. In Bos taurus (Bovine), this protein is Palmitoyltransferase ZDHHC20.